We begin with the raw amino-acid sequence, 110 residues long: uncharacterized protein (110 aa).

Positions 38-62 (SVQQNARAEEAEAAAPPAEEDSLPD) are disordered.

This is an uncharacterized protein from Mus musculus (Mouse).